Here is a 661-residue protein sequence, read N- to C-terminus: UvrABC system protein B (661 aa).

A Helicase ATP-binding domain is found at 25 to 414 (AGLSSKKRSQ…GTVVELIIRP (390 aa)). 38 to 45 (GITGSGKT) contacts ATP. Positions 91 to 114 (YYDYYQPEAYIARTDTFIEKDSSI) match the Beta-hairpin motif. The region spanning 430 to 592 (QVEDLISEIQ…IIPKTINRAI (163 aa)) is the Helicase C-terminal domain. The region spanning 621-656 (KTHIDKLKKEMLKAASNLEFEQAVKLRDQLKTLEEA) is the UVR domain.

It belongs to the UvrB family. In terms of assembly, forms a heterotetramer with UvrA during the search for lesions. Interacts with UvrC in an incision complex.

It localises to the cytoplasm. Its function is as follows. The UvrABC repair system catalyzes the recognition and processing of DNA lesions. A damage recognition complex composed of 2 UvrA and 2 UvrB subunits scans DNA for abnormalities. Upon binding of the UvrA(2)B(2) complex to a putative damaged site, the DNA wraps around one UvrB monomer. DNA wrap is dependent on ATP binding by UvrB and probably causes local melting of the DNA helix, facilitating insertion of UvrB beta-hairpin between the DNA strands. Then UvrB probes one DNA strand for the presence of a lesion. If a lesion is found the UvrA subunits dissociate and the UvrB-DNA preincision complex is formed. This complex is subsequently bound by UvrC and the second UvrB is released. If no lesion is found, the DNA wraps around the other UvrB subunit that will check the other stand for damage. The chain is UvrABC system protein B from Rickettsia conorii (strain ATCC VR-613 / Malish 7).